The primary structure comprises 161 residues: Small ribosomal subunit protein uS8m (161 aa).

The protein belongs to the universal ribosomal protein uS8 family. As to quaternary structure, component of the mitochondrial small ribosomal subunit (mt-SSU). Mature N.crassa 74S mitochondrial ribosomes consist of a small (37S) and a large (54S) subunit. The 37S small subunit contains a 16S ribosomal RNA (16S mt-rRNA) and 32 different proteins. The 54S large subunit contains a 23S rRNA (23S mt-rRNA) and 42 different proteins.

The protein resides in the mitochondrion. Component of the mitochondrial ribosome (mitoribosome), a dedicated translation machinery responsible for the synthesis of mitochondrial genome-encoded proteins, including at least some of the essential transmembrane subunits of the mitochondrial respiratory chain. The mitoribosomes are attached to the mitochondrial inner membrane and translation products are cotranslationally integrated into the membrane. This is Small ribosomal subunit protein uS8m (mrps8) from Neurospora crassa (strain ATCC 24698 / 74-OR23-1A / CBS 708.71 / DSM 1257 / FGSC 987).